We begin with the raw amino-acid sequence, 669 residues long: Acetolactate synthase, mitochondrial (669 aa).

Residues 1–140 (MTVLAPLRRL…PRHEQAAGHA (140 aa)) constitute a mitochondrion transit peptide. Glu134 lines the thiamine diphosphate pocket. FAD contacts are provided by residues Arg236, 351–372 (HGSG…LGVR), and 403–422 (DISP…IEGD). The tract at residues 497 to 577 (AHQMWAATFY…VKILILNNEE (81 aa)) is thiamine pyrophosphate binding. Mg(2+) is bound by residues Asp548 and Asn575.

Belongs to the TPP enzyme family. Mg(2+) is required as a cofactor. It depends on thiamine diphosphate as a cofactor.

The protein resides in the mitochondrion. The enzyme catalyses 2 pyruvate + H(+) = (2S)-2-acetolactate + CO2. It functions in the pathway amino-acid biosynthesis; L-isoleucine biosynthesis; L-isoleucine from 2-oxobutanoate: step 1/4. It participates in amino-acid biosynthesis; L-valine biosynthesis; L-valine from pyruvate: step 1/4. The polypeptide is Acetolactate synthase, mitochondrial (ilv1) (Schizosaccharomyces pombe (strain 972 / ATCC 24843) (Fission yeast)).